We begin with the raw amino-acid sequence, 102 residues long: Class II hydrophobin 3 (102 aa).

Residues 1–16 form the signal peptide; sequence MQFLAVAALLFTTALA. Intrachain disulfides connect C33–C83, C44–C74, C45–C57, and C84–C95.

The protein belongs to the cerato-ulmin hydrophobin family. As to quaternary structure, homotetramer. Further self-assembles to form highly ordered films at water-air interfaces through intermolecular interactions. In terms of tissue distribution, expressed in the conidia, vegetative growth and induction growth stages.

It is found in the secreted. Its subcellular location is the cell wall. The protein resides in the cytoplasm. Functionally, aerial growth, conidiation, and dispersal of filamentous fungi in the environment rely upon a capability of their secreting small amphipathic proteins called hydrophobins (HPBs) with low sequence identity. Class I can self-assemble into an outermost layer of rodlet bundles on aerial cell surfaces, conferring cellular hydrophobicity that supports fungal growth, development and dispersal; whereas Class II form highly ordered films at water-air interfaces through intermolecular interactions but contribute nothing to the rodlet structure. Hbf3 is a class II hydrophobin that has a role in vegetative growth and asexual development. In Hypocrea jecorina (strain QM6a) (Trichoderma reesei), this protein is Class II hydrophobin 3.